Reading from the N-terminus, the 205-residue chain is Cytochrome c oxidase subunit 2 (205 aa).

Cu cation-binding residues include H115, C150, E152, C154, H158, and M161. Position 152 (E152) interacts with Mg(2+).

The protein belongs to the cytochrome c oxidase subunit 2 family. Component of the cytochrome c oxidase (complex IV, CIV), a multisubunit enzyme composed of a catalytic core of 3 subunits and several supernumerary subunits. The complex exists as a monomer or a dimer and forms supercomplexes (SCs) in the inner mitochondrial membrane with ubiquinol-cytochrome c oxidoreductase (cytochrome b-c1 complex, complex III, CIII). Cu cation is required as a cofactor.

Its subcellular location is the mitochondrion inner membrane. The enzyme catalyses 4 Fe(II)-[cytochrome c] + O2 + 8 H(+)(in) = 4 Fe(III)-[cytochrome c] + 2 H2O + 4 H(+)(out). In terms of biological role, component of the cytochrome c oxidase, the last enzyme in the mitochondrial electron transport chain which drives oxidative phosphorylation. The respiratory chain contains 3 multisubunit complexes succinate dehydrogenase (complex II, CII), ubiquinol-cytochrome c oxidoreductase (cytochrome b-c1 complex, complex III, CIII) and cytochrome c oxidase (complex IV, CIV), that cooperate to transfer electrons derived from NADH and succinate to molecular oxygen, creating an electrochemical gradient over the inner membrane that drives transmembrane transport and the ATP synthase. Cytochrome c oxidase is the component of the respiratory chain that catalyzes the reduction of oxygen to water. Electrons originating from reduced cytochrome c in the intermembrane space (IMS) are transferred via the dinuclear copper A center (CU(A)) of subunit 2 and heme A of subunit 1 to the active site in subunit 1, a binuclear center (BNC) formed by heme A3 and copper B (CU(B)). The BNC reduces molecular oxygen to 2 water molecules using 4 electrons from cytochrome c in the IMS and 4 protons from the mitochondrial matrix. In Paramecium tetraurelia, this protein is Cytochrome c oxidase subunit 2 (COII).